The chain runs to 240 residues: Triosephosphate isomerase (240 aa).

Substrate is bound at residue 6–8 (NLK). The active-site Electrophile is H88. Catalysis depends on E157, which acts as the Proton acceptor. The substrate site is built by G163 and S193.

Belongs to the triosephosphate isomerase family. In terms of assembly, homodimer.

Its subcellular location is the cytoplasm. The catalysed reaction is D-glyceraldehyde 3-phosphate = dihydroxyacetone phosphate. The protein operates within carbohydrate biosynthesis; gluconeogenesis. It functions in the pathway carbohydrate degradation; glycolysis; D-glyceraldehyde 3-phosphate from glycerone phosphate: step 1/1. Functionally, involved in the gluconeogenesis. Catalyzes stereospecifically the conversion of dihydroxyacetone phosphate (DHAP) to D-glyceraldehyde-3-phosphate (G3P). The chain is Triosephosphate isomerase from Sulfurimonas denitrificans (strain ATCC 33889 / DSM 1251) (Thiomicrospira denitrificans (strain ATCC 33889 / DSM 1251)).